The primary structure comprises 113 residues: Large ribosomal subunit protein bL17 (113 aa).

Belongs to the bacterial ribosomal protein bL17 family. Part of the 50S ribosomal subunit. Contacts protein L32.

The polypeptide is Large ribosomal subunit protein bL17 (Caldicellulosiruptor bescii (strain ATCC BAA-1888 / DSM 6725 / KCTC 15123 / Z-1320) (Anaerocellum thermophilum)).